Here is a 379-residue protein sequence, read N- to C-terminus: Chaperone protein DnaJ (379 aa).

Residues 5–70 (DYYEVLGVQK…QKRAAYDRFG (66 aa)) enclose the J domain. The CR-type zinc finger occupies 137–215 (GATTTVRVPT…CGGQGRVRKE (79 aa)). The Zn(2+) site is built by Cys150, Cys153, Cys167, Cys170, Cys189, Cys192, Cys203, and Cys206. 4 CXXCXGXG motif repeats span residues 150 to 157 (CESCNGTG), 167 to 174 (CPTCNGHG), 189 to 196 (CPACHGVG), and 203 to 210 (CRTCGGQG).

The protein belongs to the DnaJ family. Homodimer. It depends on Zn(2+) as a cofactor.

The protein resides in the cytoplasm. Its function is as follows. Participates actively in the response to hyperosmotic and heat shock by preventing the aggregation of stress-denatured proteins and by disaggregating proteins, also in an autonomous, DnaK-independent fashion. Unfolded proteins bind initially to DnaJ; upon interaction with the DnaJ-bound protein, DnaK hydrolyzes its bound ATP, resulting in the formation of a stable complex. GrpE releases ADP from DnaK; ATP binding to DnaK triggers the release of the substrate protein, thus completing the reaction cycle. Several rounds of ATP-dependent interactions between DnaJ, DnaK and GrpE are required for fully efficient folding. Also involved, together with DnaK and GrpE, in the DNA replication of plasmids through activation of initiation proteins. This is Chaperone protein DnaJ from Rhodospirillum centenum (strain ATCC 51521 / SW).